Consider the following 738-residue polypeptide: Glycogen [starch] synthase, muscle (738 aa).

Position 8 is a phosphoserine; by AMPK and PKA (S8). Position 11 is a phosphoserine (S11). K39 contacts UDP. Positions 205 and 211 each coordinate UDP-alpha-D-glucose. H291, E292, Q294, H297, and K301 together coordinate alpha-D-glucose 6-phosphate. R331 contacts UDP. R331 serves as a coordination point for UDP-alpha-D-glucose. S412 bears the Phosphoserine mark. H501 lines the alpha-D-glucose 6-phosphate pocket. E510, W512, and G513 together coordinate UDP-alpha-D-glucose. T515 is a binding site for UDP. Positions 582 and 586 each coordinate alpha-D-glucose 6-phosphate. Residues 632–738 (QGYRYPRPAS…PTSSLGEERN (107 aa)) are disordered. Residues S641 and S645 each carry the phosphoserine modification. S649 bears the Phosphoserine; by GSK3-alpha and GSK3-beta mark. S652, S653, S657, and S672 each carry phosphoserine. The segment covering 682–695 (AKDRRNIRAPEWPR) has biased composition (basic and acidic residues). Phosphoserine is present on residues S698, S709, and S711. A compositionally biased stretch (low complexity) spans 698–738 (SCSSSTGGSKRSNSVDTGPSSSLSTPTEPLSPTSSLGEERN). Phosphothreonine is present on T722. 2 positions are modified to phosphoserine: S728 and S732.

It belongs to the glycosyltransferase 3 family. Part of the GYS1-GYG1 complex, a heterooctamer composed of a tetramer of GYS1 and 2 dimers of GYG1, where each GYS1 protomer binds to one GYG1 subunit (via GYG1 C-terminus); the GYS1 tetramer may dissociate from GYG1 dimers to continue glycogen polymerization on its own. Phosphorylation at Ser-8 by AMPK inactivates the enzyme activity. Primed phosphorylation at Ser-657 (site 5) by CSNK2A1 and CSNK2A2 is required for inhibitory phosphorylation at Ser-641 (site 3a), Ser-645 (site 3b), Ser-649 (site 3c) and Ser-653 (site 4) by GSK3A an GSK3B. Phosphorylated at Ser-641 by PASK, leading to inactivation; phosphorylation by PASK is inhibited by glycogen. Phosphorylated at Ser-641 by DYRK2, leading to inactivation. Dephosphorylation at Ser-641 and Ser-645 by PP1 activates the enzyme.

It catalyses the reaction [(1-&gt;4)-alpha-D-glucosyl](n) + UDP-alpha-D-glucose = [(1-&gt;4)-alpha-D-glucosyl](n+1) + UDP + H(+). The protein operates within glycan biosynthesis; glycogen biosynthesis. With respect to regulation, allosteric activation by glucose-6-phosphate. Phosphorylation reduces the activity towards UDP-glucose. When in the non-phosphorylated state, glycogen synthase does not require glucose-6-phosphate as an allosteric activator; when phosphorylated it does. Glycogen synthase participates in the glycogen biosynthetic process along with glycogenin and glycogen branching enzyme. Extends the primer composed of a few glucose units formed by glycogenin by adding new glucose units to it. In this context, glycogen synthase transfers the glycosyl residue from UDP-Glc to the non-reducing end of alpha-1,4-glucan. The protein is Glycogen [starch] synthase, muscle (Gys1) of Rattus norvegicus (Rat).